A 414-amino-acid polypeptide reads, in one-letter code: Putative L-lactate dehydrogenase (414 aa).

The FMN hydroxy acid dehydrogenase domain occupies 29 to 406; the sequence is RRLGAALTIQ…SPRHVTQLRR (378 aa). Residue tyrosine 55 participates in a 2-oxocarboxylate binding. FMN is bound by residues serine 137 and glutamine 159. Tyrosine 161 serves as a coordination point for a 2-oxocarboxylate. FMN is bound at residue threonine 187. Residue arginine 196 coordinates a 2-oxocarboxylate. Lysine 277 provides a ligand contact to FMN. The active-site Proton acceptor is the histidine 301. Arginine 304 is a binding site for a 2-oxocarboxylate. FMN contacts are provided by residues 332–336 and 355–356; these read DTGIM and GR.

This sequence belongs to the FMN-dependent alpha-hydroxy acid dehydrogenase family. Requires FMN as cofactor.

It carries out the reaction (S)-lactate + A = pyruvate + AH2. This is Putative L-lactate dehydrogenase (lldD) from Mycobacterium tuberculosis (strain ATCC 25618 / H37Rv).